The following is a 315-amino-acid chain: 4-hydroxy-3-methylbut-2-enyl diphosphate reductase (315 aa).

Cys-12 lines the [4Fe-4S] cluster pocket. Residues His-41 and His-74 each contribute to the (2E)-4-hydroxy-3-methylbut-2-enyl diphosphate site. Dimethylallyl diphosphate contacts are provided by His-41 and His-74. Isopentenyl diphosphate contacts are provided by His-41 and His-74. Cys-96 lines the [4Fe-4S] cluster pocket. (2E)-4-hydroxy-3-methylbut-2-enyl diphosphate is bound at residue His-124. His-124 is a dimethylallyl diphosphate binding site. Residue His-124 coordinates isopentenyl diphosphate. Catalysis depends on Glu-126, which acts as the Proton donor. A (2E)-4-hydroxy-3-methylbut-2-enyl diphosphate-binding site is contributed by Thr-168. Residue Cys-198 participates in [4Fe-4S] cluster binding. (2E)-4-hydroxy-3-methylbut-2-enyl diphosphate-binding residues include Ser-226, Ser-227, Asn-228, and Ser-270. Dimethylallyl diphosphate is bound by residues Ser-226, Ser-227, Asn-228, and Ser-270. Ser-226, Ser-227, Asn-228, and Ser-270 together coordinate isopentenyl diphosphate.

It belongs to the IspH family. Requires [4Fe-4S] cluster as cofactor.

It carries out the reaction isopentenyl diphosphate + 2 oxidized [2Fe-2S]-[ferredoxin] + H2O = (2E)-4-hydroxy-3-methylbut-2-enyl diphosphate + 2 reduced [2Fe-2S]-[ferredoxin] + 2 H(+). It catalyses the reaction dimethylallyl diphosphate + 2 oxidized [2Fe-2S]-[ferredoxin] + H2O = (2E)-4-hydroxy-3-methylbut-2-enyl diphosphate + 2 reduced [2Fe-2S]-[ferredoxin] + 2 H(+). The protein operates within isoprenoid biosynthesis; dimethylallyl diphosphate biosynthesis; dimethylallyl diphosphate from (2E)-4-hydroxy-3-methylbutenyl diphosphate: step 1/1. It functions in the pathway isoprenoid biosynthesis; isopentenyl diphosphate biosynthesis via DXP pathway; isopentenyl diphosphate from 1-deoxy-D-xylulose 5-phosphate: step 6/6. In terms of biological role, catalyzes the conversion of 1-hydroxy-2-methyl-2-(E)-butenyl 4-diphosphate (HMBPP) into a mixture of isopentenyl diphosphate (IPP) and dimethylallyl diphosphate (DMAPP). Acts in the terminal step of the DOXP/MEP pathway for isoprenoid precursor biosynthesis. The sequence is that of 4-hydroxy-3-methylbut-2-enyl diphosphate reductase from Pseudomonas entomophila (strain L48).